Here is a 429-residue protein sequence, read N- to C-terminus: TNFAIP3-interacting protein 2 (429 aa).

A Phosphoserine modification is found at Ser7. The stretch at 29–117 forms a coiled coil; it reads QRLRRLQDQL…MQQLLSQPQH (89 aa). A compositionally biased stretch (basic and acidic residues) spans 177 to 195; the sequence is HAQRNVGERSPDQSEHTDG. Residues 177–199 are disordered; it reads HAQRNVGERSPDQSEHTDGHTSV. Coiled-coil stretches lie at residues 196–226 and 255–340; these read HTSV…LNAK and ELMR…QVSW. Positions 289–347 are ubiquitin-binding domain (UBD); the sequence is RDAALERVQMLEQQILAYKDDFMSERADRERAQSRIQELEEKVASLLHQVSWRQDSREP. Residues 372–400 are disordered; it reads PGGWRPGTGSQQPEPPAEGGHPGAAQRGQ. Residues 388–397 are compositionally biased toward low complexity; sequence AEGGHPGAAQ. The CCHC NOA-type zinc-finger motif lies at 397–429; it reads QRGQGDLQCPHCLQCFSDEQGEELLRHVAECCQ. Residues Cys405, Cys408, His423, and Cys427 each coordinate Zn(2+).

As to quaternary structure, interacts with STK11/LKB1, TNFAIP3, IKBKG, NFKB1, MAP3K8, TEK, RIPK1, CHUK, IKBKB and SMARCD1. Interacts with polyubiquitin. (Microbial infection) Interacts with severe fever with thrombocytopenia syndrome virus (SFTSV) NSs; this interaction promotes TPL2 complex formation and signaling activity leading to IL-10 production. In vitro phosphorylated by CHUK. Post-translationally, ubiquitinated; undergoes 'Lys-48'-linked polyubiquitination probably leading to constitutive proteasomal degradation which can be impaired by IKK-A/CHUK or IKBKB probably involving deubiquitination. Deubiquitinated by USP35; leading to stabilization and inhibition of TNFalpha-induced NF-kappa-B activation. As to expression, ubiquitously expressed in all tissues examined.

It localises to the cytoplasm. Its subcellular location is the nucleus. Inhibits NF-kappa-B activation by blocking the interaction of RIPK1 with its downstream effector NEMO/IKBKG. Forms a ternary complex with NFKB1 and MAP3K8 but appears to function upstream of MAP3K8 in the TLR4 signaling pathway that regulates MAP3K8 activation. Involved in activation of the MEK/ERK signaling pathway during innate immune response; this function seems to be stimulus- and cell type specific. Required for stability of MAP3K8. Involved in regulation of apoptosis in endothelial cells; promotes TEK agonist-stimulated endothelial survival. May act as transcriptional coactivator when translocated to the nucleus. Enhances CHUK-mediated NF-kappa-B activation involving NF-kappa-B p50-p65 and p50-c-Rel complexes. This chain is TNFAIP3-interacting protein 2, found in Homo sapiens (Human).